We begin with the raw amino-acid sequence, 375 residues long: Probable cytochrome c oxidase subunit 2 (375 aa).

The next 3 helical transmembrane spans lie at leucine 36 to tryptophan 56, isoleucine 80 to phenylalanine 100, and leucine 122 to valine 142. Positions 264, 305, 309, and 313 each coordinate Cu cation. Polar residues predominate over residues valine 353 to aspartate 363. Residues valine 353 to glutamate 375 are disordered.

It belongs to the cytochrome c oxidase subunit 2 family. Cu cation serves as cofactor. Heme is required as a cofactor.

The protein resides in the cell membrane. The enzyme catalyses 4 Fe(II)-[cytochrome c] + O2 + 8 H(+)(in) = 4 Fe(III)-[cytochrome c] + 2 H2O + 4 H(+)(out). Functionally, subunits I and II form the functional core of the enzyme complex. Electrons originating in cytochrome c are transferred via heme a and Cu(A) to the binuclear center formed by heme a3 and Cu(B). The polypeptide is Probable cytochrome c oxidase subunit 2 (ctaC) (Nocardia farcinica (strain IFM 10152)).